Consider the following 200-residue polypeptide: MEPYTLLLFIFVIQIVKQIISAVGKQSIESISWVLYCRVAPKFGHSKLASMSQKSSQLRTVAGERRAVSAQDQYAKWTKLNRQHDKLVAEIEQLQKEVDLDKVKVNTFTGYLIAILTSIPIWFFRVWYRSVVLFYFPPGILPRALEWSIALPFTVTGGVSLTVWMMAAGAVASSLTFLFMFPFEKAVPKPVLAKKSPQQL.

Topologically, residues 1 to 6 are lumenal; it reads MEPYTL. Residues 7 to 26 traverse the membrane as a helical segment; it reads LLFIFVIQIVKQIISAVGKQ. The Cytoplasmic portion of the chain corresponds to 27–113; it reads SIESISWVLY…KVNTFTGYLI (87 aa). Residues 75 to 107 adopt a coiled-coil conformation; sequence AKWTKLNRQHDKLVAEIEQLQKEVDLDKVKVNT. Residues 114 to 134 traverse the membrane as a helical segment; sequence AILTSIPIWFFRVWYRSVVLF. Over 135-158 the chain is Lumenal; the sequence is YFPPGILPRALEWSIALPFTVTGG. Residues 159-175 form a helical membrane-spanning segment; sequence VSLTVWMMAAGAVASSL. At 176–200 the chain is on the cytoplasmic side; it reads TFLFMFPFEKAVPKPVLAKKSPQQL.

The protein belongs to the WRB/GET1 family. Component of the Golgi to ER traffic (GET) complex, which is composed of GET1, GET2 and GET3. Within the complex, GET1 and GET2 form a heterotetramer which is stabilized by phosphatidylinositol binding and which binds to the GET3 homodimer.

It is found in the endoplasmic reticulum membrane. It localises to the golgi apparatus membrane. Its function is as follows. Required for the post-translational delivery of tail-anchored (TA) proteins to the endoplasmic reticulum. Together with GET2, acts as a membrane receptor for soluble GET3, which recognizes and selectively binds the transmembrane domain of TA proteins in the cytosol. The GET complex cooperates with the HDEL receptor ERD2 to mediate the ATP-dependent retrieval of resident ER proteins that contain a C-terminal H-D-E-L retention signal from the Golgi to the ER. This is Golgi to ER traffic protein 1 from Meyerozyma guilliermondii (strain ATCC 6260 / CBS 566 / DSM 6381 / JCM 1539 / NBRC 10279 / NRRL Y-324) (Yeast).